A 357-amino-acid chain; its full sequence is Mitogen-activated protein kinase kinase SIPKK (357 aa).

The Protein kinase domain occupies 70-330 (FEAVKVIGKG…ANELMRHPFI (261 aa)). ATP is bound by residues 76–84 (IGKGNGGIV) and Lys99. The Proton acceptor role is filled by Asp192.

This sequence belongs to the protein kinase superfamily. STE Ser/Thr protein kinase family. MAP kinase kinase subfamily. Interacts with SIPK.

It catalyses the reaction L-tyrosyl-[protein] + ATP = O-phospho-L-tyrosyl-[protein] + ADP + H(+). The catalysed reaction is L-seryl-[protein] + ATP = O-phospho-L-seryl-[protein] + ADP + H(+). The enzyme catalyses L-threonyl-[protein] + ATP = O-phospho-L-threonyl-[protein] + ADP + H(+). Functionally, phosphorylates myelin basic protein (MBP) in vitro. May be involved in disease resistance. The protein is Mitogen-activated protein kinase kinase SIPKK of Nicotiana tabacum (Common tobacco).